The primary structure comprises 108 residues: Trp operon repressor homolog (108 aa).

The DNA-binding element occupies 59–82 (QRQISQLLGVGVATITRGSNELKS).

This sequence belongs to the TrpR family. In terms of assembly, homodimer.

The protein resides in the cytoplasm. Functionally, this protein is an aporepressor. When complexed with L-tryptophan it binds the operator region of the trp operon and prevents the initiation of transcription. This chain is Trp operon repressor homolog, found in Aliivibrio fischeri (strain MJ11) (Vibrio fischeri).